The following is a 282-amino-acid chain: Bifunctional protein FolD (282 aa).

NADP(+) contacts are provided by residues 163–165 (NRS), T188, and I229.

The protein belongs to the tetrahydrofolate dehydrogenase/cyclohydrolase family. In terms of assembly, homodimer.

The catalysed reaction is (6R)-5,10-methylene-5,6,7,8-tetrahydrofolate + NADP(+) = (6R)-5,10-methenyltetrahydrofolate + NADPH. It catalyses the reaction (6R)-5,10-methenyltetrahydrofolate + H2O = (6R)-10-formyltetrahydrofolate + H(+). It participates in one-carbon metabolism; tetrahydrofolate interconversion. Its function is as follows. Catalyzes the oxidation of 5,10-methylenetetrahydrofolate to 5,10-methenyltetrahydrofolate and then the hydrolysis of 5,10-methenyltetrahydrofolate to 10-formyltetrahydrofolate. The sequence is that of Bifunctional protein FolD from Malacoplasma penetrans (strain HF-2) (Mycoplasma penetrans).